A 352-amino-acid chain; its full sequence is tRNA(Ile)-lysidine synthase (352 aa).

58 to 63 (SGGADS) contributes to the ATP binding site.

Belongs to the tRNA(Ile)-lysidine synthase family.

The protein localises to the cytoplasm. The enzyme catalyses cytidine(34) in tRNA(Ile2) + L-lysine + ATP = lysidine(34) in tRNA(Ile2) + AMP + diphosphate + H(+). In terms of biological role, ligates lysine onto the cytidine present at position 34 of the AUA codon-specific tRNA(Ile) that contains the anticodon CAU, in an ATP-dependent manner. Cytidine is converted to lysidine, thus changing the amino acid specificity of the tRNA from methionine to isoleucine. This chain is tRNA(Ile)-lysidine synthase, found in Streptomyces coelicolor (strain ATCC BAA-471 / A3(2) / M145).